A 379-amino-acid polypeptide reads, in one-letter code: Dihydroflavonol 4-reductase (379 aa).

NADP(+) is bound by residues Lys56 and Tyr175.

Belongs to the NAD(P)-dependent epimerase/dehydratase family. Dihydroflavonol-4-reductase subfamily. Expressed in both leaf and hypocotyl tissues.

It carries out the reaction a (2R,3S,4S)-leucoanthocyanidin + NADP(+) = a (2R,3R)-dihydroflavonol + NADPH + H(+). The enzyme catalyses (2S)-flavan-4-ol + NADP(+) = (2S)-flavanone + NADPH + H(+). The protein operates within pigment biosynthesis; anthocyanin biosynthesis. Its function is as follows. Bifunctional enzyme involved in flavonoid metabolism. In Solanum lycopersicum (Tomato), this protein is Dihydroflavonol 4-reductase.